The chain runs to 345 residues: Nuclear distribution protein nudE-like 1 (345 aa).

Positions 28 to 190 form a coiled coil; sequence QSFQEARDEL…LAVRERQQEV (163 aa). Residues 56-166 form a self-association region; the sequence is VQAEQRNRDL…LDEKESLLVS (111 aa). Residues 64 to 189 form an interaction with KATNB1 region; sequence DLQADNQRLK…ELAVRERQQE (126 aa). The required for interaction with PAFAH1B1 stretch occupies residues 114-133; it reads YVRELEQANDDLERAKRATI. The tract at residues 175–345 is interaction with CENPF; it reads RDLRQELAVR…SAPGMLPLSV (171 aa). The interval 189-256 is interaction with YWHAE; that stretch reads EVTRKSAPSS…SARISALNIV (68 aa). The segment at 191–345 is interaction with NEFL; sequence TRKSAPSSPT…SAPGMLPLSV (155 aa). Residues 195 to 256 form an interaction with KATNA1 region; sequence APSSPTLDCE…SARISALNIV (62 aa). Residue Ser215 is modified to Phosphoserine. The residue at position 219 (Thr219) is a Phosphothreonine; by CDK1 and MAPK1. Ser231 bears the Phosphoserine mark. The interval 241 to 280 is interaction with DISC1; that stretch reads TSPLTPSARISALNIVGDLLRKVGALESKLAACRNFAKDQ. At Ser242 the chain carries Phosphoserine; by CDK1. Residue Thr245 is modified to Phosphothreonine; by CDK1 and MAPK1. Residues 256–291 form a required for localization to the centrosome and interaction with dynein, dynactin, tubulin gamma, PCM1 and PCNT region; sequence VGDLLRKVGALESKLAACRNFAKDQASRKSYISGNV. Residue Cys273 is the site of S-palmitoyl cysteine; by ZDHHC2, ZDHHC3 and ZDHHC7 attachment. A disordered region spans residues 315 to 345; sequence GAVNGFDPAPPPPGLGSSRPSSAPGMLPLSV. Residues 329–339 show a composition bias toward low complexity; that stretch reads LGSSRPSSAPG. A Phosphoserine modification is found at Ser344.

This sequence belongs to the nudE family. Self-associates. Interacts with DISC1, dynein, dynactin, tubulin gamma, KATNA1, KATNB1, microtubules, PAFAH1B1, PCM1, PCNT, and YWHAE. Interacts directly with NEFL and indirectly with NEFH. Interacts (via C-terminus) with CENPF. Interacts with ZNF365. Interacts with PLEKHM1 (via N- and C-terminus). Interacts with GTP-bound RAB9A; the interaction may lead to RAB9A-dynein motor tethering. In terms of processing, phosphorylated in mitosis. Can be phosphorylated by CDK1, CDK5 and MAPK1. Phosphorylation by CDK5 promotes interaction with KATNA1 and YWHAE. Post-translationally, palmitoylation at Cys-273 reduces affinity for dynein.

It is found in the cytoplasm. Its subcellular location is the cytoskeleton. The protein localises to the microtubule organizing center. It localises to the centrosome. The protein resides in the chromosome. It is found in the centromere. Its subcellular location is the kinetochore. The protein localises to the spindle. In terms of biological role, required for organization of the cellular microtubule array and microtubule anchoring at the centrosome. May regulate microtubule organization at least in part by targeting the microtubule severing protein KATNA1 to the centrosome. Also positively regulates the activity of the minus-end directed microtubule motor protein dynein. May enhance dynein-mediated microtubule sliding by targeting dynein to the microtubule plus ends. Required for several dynein- and microtubule-dependent processes such as the maintenance of Golgi integrity, the centripetal motion of secretory vesicles and the coupling of the nucleus and centrosome. Also required during brain development for the migration of newly formed neurons from the ventricular/subventricular zone toward the cortical plate. Plays a role, together with DISC1, in the regulation of neurite outgrowth. Required for mitosis in some cell types but appears to be dispensible for mitosis in cortical neuronal progenitors, which instead requires NDE1. Facilitates the polymerization of neurofilaments from the individual subunits NEFH and NEFL. Positively regulates lysosome peripheral distribution and ruffled border formation in osteoclasts. Plays a role, together with DISC1, in the regulation of neurite outgrowth. May act as a RAB9A/B effector that tethers RAB9-associated late endosomes to the dynein motor for their retrograde transport to the trans-Golgi network. In Pongo abelii (Sumatran orangutan), this protein is Nuclear distribution protein nudE-like 1 (NDEL1).